We begin with the raw amino-acid sequence, 290 residues long: uncharacterized protein (290 aa).

Residues 2-238 (LKTENLSVGY…EIVNELYDLK (237 aa)) enclose the ABC transporter domain. An ATP-binding site is contributed by 34 to 41 (GPNGAGKS).

It belongs to the ABC transporter superfamily.

This is an uncharacterized protein from Methanocaldococcus jannaschii (strain ATCC 43067 / DSM 2661 / JAL-1 / JCM 10045 / NBRC 100440) (Methanococcus jannaschii).